The primary structure comprises 658 residues: UvrABC system protein B (658 aa).

The Helicase ATP-binding domain occupies 25–178 (KSLKNNNHYQ…KNFLLKLVEM (154 aa)). 38–45 (GVTGSGKT) provides a ligand contact to ATP. A Beta-hairpin motif is present at residues 91-114 (HFDYYQPESYIPRRDLFIEKDSSI). The Helicase C-terminal domain maps to 433-607 (QVQDLFDEIK…ELKLRDDEIR (175 aa)). The region spanning 623–658 (EKIIKELDKKMRECAKNLDFEEAMRLRDEIAKLRTL) is the UVR domain.

This sequence belongs to the UvrB family. As to quaternary structure, forms a heterotetramer with UvrA during the search for lesions. Interacts with UvrC in an incision complex.

The protein resides in the cytoplasm. Its function is as follows. The UvrABC repair system catalyzes the recognition and processing of DNA lesions. A damage recognition complex composed of 2 UvrA and 2 UvrB subunits scans DNA for abnormalities. Upon binding of the UvrA(2)B(2) complex to a putative damaged site, the DNA wraps around one UvrB monomer. DNA wrap is dependent on ATP binding by UvrB and probably causes local melting of the DNA helix, facilitating insertion of UvrB beta-hairpin between the DNA strands. Then UvrB probes one DNA strand for the presence of a lesion. If a lesion is found the UvrA subunits dissociate and the UvrB-DNA preincision complex is formed. This complex is subsequently bound by UvrC and the second UvrB is released. If no lesion is found, the DNA wraps around the other UvrB subunit that will check the other stand for damage. The sequence is that of UvrABC system protein B from Helicobacter pylori (strain HPAG1).